A 129-amino-acid polypeptide reads, in one-letter code: Large ribosomal subunit protein uL22 (129 aa).

Belongs to the universal ribosomal protein uL22 family. Part of the 50S ribosomal subunit.

In terms of biological role, this protein binds specifically to 23S rRNA; its binding is stimulated by other ribosomal proteins, e.g. L4, L17, and L20. It is important during the early stages of 50S assembly. It makes multiple contacts with different domains of the 23S rRNA in the assembled 50S subunit and ribosome. The globular domain of the protein is located near the polypeptide exit tunnel on the outside of the subunit, while an extended beta-hairpin is found that lines the wall of the exit tunnel in the center of the 70S ribosome. This Phytoplasma sp. (strain STRAWB2) protein is Large ribosomal subunit protein uL22.